The following is a 242-amino-acid chain: uncharacterized protein (242 aa).

2 disordered regions span residues 43–70 (SRRSGKTSAVLKAGRQSVSGRKNSTSKD) and 112–162 (RMSR…VTPR). The segment covering 58-70 (QSVSGRKNSTSKD) has biased composition (polar residues). Low complexity-rich tracts occupy residues 122 to 139 (ERAAAAAAAAAGGDAGHA) and 147 to 162 (ADGARAPRSPGQVTPR).

This is an uncharacterized protein from Homo sapiens (Human).